The chain runs to 148 residues: Large ribosomal subunit protein bL9 (148 aa).

This sequence belongs to the bacterial ribosomal protein bL9 family.

Its function is as follows. Binds to the 23S rRNA. This Staphylococcus saprophyticus subsp. saprophyticus (strain ATCC 15305 / DSM 20229 / NCIMB 8711 / NCTC 7292 / S-41) protein is Large ribosomal subunit protein bL9.